The chain runs to 443 residues: 3-phosphoshikimate 1-carboxyvinyltransferase (443 aa).

Residues Lys-25, Ser-26, and Arg-30 each contribute to the 3-phosphoshikimate site. Lys-25 contacts phosphoenolpyruvate. Phosphoenolpyruvate contacts are provided by Gly-117 and Arg-145. Ser-188, Ser-189, Gln-190, Ser-217, Glu-331, and His-358 together coordinate 3-phosphoshikimate. Gln-190 provides a ligand contact to phosphoenolpyruvate. The active-site Proton acceptor is the Glu-331. Phosphoenolpyruvate is bound by residues Arg-362, Arg-404, and Lys-428.

It belongs to the EPSP synthase family. As to quaternary structure, monomer.

Its subcellular location is the cytoplasm. It carries out the reaction 3-phosphoshikimate + phosphoenolpyruvate = 5-O-(1-carboxyvinyl)-3-phosphoshikimate + phosphate. It participates in metabolic intermediate biosynthesis; chorismate biosynthesis; chorismate from D-erythrose 4-phosphate and phosphoenolpyruvate: step 6/7. Functionally, catalyzes the transfer of the enolpyruvyl moiety of phosphoenolpyruvate (PEP) to the 5-hydroxyl of shikimate-3-phosphate (S3P) to produce enolpyruvyl shikimate-3-phosphate and inorganic phosphate. The polypeptide is 3-phosphoshikimate 1-carboxyvinyltransferase (Tropheryma whipplei (strain TW08/27) (Whipple's bacillus)).